We begin with the raw amino-acid sequence, 186 residues long: Ribosome-recycling factor (186 aa).

This sequence belongs to the RRF family.

Its subcellular location is the cytoplasm. In terms of biological role, responsible for the release of ribosomes from messenger RNA at the termination of protein biosynthesis. May increase the efficiency of translation by recycling ribosomes from one round of translation to another. The protein is Ribosome-recycling factor of Albidiferax ferrireducens (strain ATCC BAA-621 / DSM 15236 / T118) (Rhodoferax ferrireducens).